Here is a 386-residue protein sequence, read N- to C-terminus: Paralemmin-1 (386 aa).

Residues 4-115 (VEANTLQQER…TKENLAEAAA (112 aa)) are a coiled coil. Disordered stretches follow at residues 21 to 40 (RKRQTEIENKRRQLEDDRRQ), 51 to 149 (ERWL…PMKA), 240 to 290 (EATA…TMIF), and 321 to 378 (DAES…AKKQ). Composition is skewed to basic and acidic residues over residues 24–40 (QTEIENKRRQLEDDRRQ) and 68–95 (AMKKQMQEDEVKTKELEETIQRLERELE). Low complexity predominate over residues 97-116 (LENSSSVTSTKENLAEAAAP). 3 stretches are compositionally biased toward basic and acidic residues: residues 259-282 (PRREITGLQAKPRENSTEGAEPSR), 322-334 (AESKAEPEGKDHA), and 365-377 (EAKEAEPDMDAKK). S-palmitoyl cysteine attachment occurs at residues Cys-380 and Cys-382. Residue Cys-383 is modified to Cysteine methyl ester. Cys-383 carries S-farnesyl cysteine lipidation. Residues 384 to 386 (TVM) constitute a propeptide, removed in mature form.

It belongs to the paralemmin family. As to quaternary structure, interacts with dopamine receptor DRD3. In terms of processing, phosphorylated. Expressed in the lens (at protein level). Highly expressed in forebrain and cerebellum with lower expression in adrenal gland and heart. Expression weak or undetectable in other tissues.

The protein resides in the cell membrane. The protein localises to the cell projection. It is found in the filopodium membrane. It localises to the axon. Its subcellular location is the dendrite. The protein resides in the dendritic spine. The protein localises to the basolateral cell membrane. It is found in the apicolateral cell membrane. Its function is as follows. Involved in plasma membrane dynamics and cell process formation. Isoform 1 and isoform 2 are necessary for axonal and dendritic filopodia induction, for dendritic spine maturation and synapse formation in a palmitoylation-dependent manner. This is Paralemmin-1 (PALM) from Gallus gallus (Chicken).